The chain runs to 132 residues: Small ribosomal subunit protein uS8 (132 aa).

This sequence belongs to the universal ribosomal protein uS8 family. In terms of assembly, part of the 30S ribosomal subunit. Contacts proteins S5 and S12.

In terms of biological role, one of the primary rRNA binding proteins, it binds directly to 16S rRNA central domain where it helps coordinate assembly of the platform of the 30S subunit. This is Small ribosomal subunit protein uS8 from Rhodopseudomonas palustris (strain HaA2).